The sequence spans 217 residues: uncharacterized protein (217 aa).

This is an uncharacterized protein from Homo sapiens (Human).